The chain runs to 452 residues: Pup--protein ligase (452 aa).

Glu-9 is a Mg(2+) binding site. Arg-53 lines the ATP pocket. Mg(2+) is bound at residue Tyr-55. Catalysis depends on Asp-57, which acts as the Proton acceptor. Position 63 (Glu-63) interacts with Mg(2+). Residues Thr-66 and Trp-419 each coordinate ATP.

This sequence belongs to the Pup ligase/Pup deamidase family. Pup-conjugating enzyme subfamily.

The catalysed reaction is ATP + [prokaryotic ubiquitin-like protein]-L-glutamate + [protein]-L-lysine = ADP + phosphate + N(6)-([prokaryotic ubiquitin-like protein]-gamma-L-glutamyl)-[protein]-L-lysine.. It participates in protein degradation; proteasomal Pup-dependent pathway. The protein operates within protein modification; protein pupylation. Catalyzes the covalent attachment of the prokaryotic ubiquitin-like protein modifier Pup to the proteasomal substrate proteins, thereby targeting them for proteasomal degradation. This tagging system is termed pupylation. The ligation reaction involves the side-chain carboxylate of the C-terminal glutamate of Pup and the side-chain amino group of a substrate lysine. The sequence is that of Pup--protein ligase from Mycobacterium leprae (strain Br4923).